The sequence spans 627 residues: WPP domain-interacting tail-anchored protein 2 (627 aa).

Coiled-coil stretches lie at residues 81–152 (CGIL…RRTL), 188–218 (LEKS…KLHY), and 312–542 (TLRE…KILR). Positions 577 to 597 (SLQEDERTREEPEKQSVSEKS) are disordered. The span at 580–597 (EDERTREEPEKQSVSEKS) shows a compositional bias: basic and acidic residues. Residues 606–626 (LKHILVVALVFVLFCSFFGVT) form a helical membrane-spanning segment.

As to quaternary structure, component of Ran complexes at least composed of WIT1 or WIT2, RANGAP1 or RANGAP2, and WIP1 or WIP2 or WIP3. Interacts with KAKU1. Core component of the LINC complex which is composed of inner nuclear membrane SUN domain-containing proteins coupled to outer nuclear membrane WIP and WIT proteins. The LINC complex also involves nucleoskeletal proteins CRWN/LINC and possibly KAKU4 and the cytoskeletal myosin KAKU1. Interacts with WIP1, WIP2 and WIP3. In terms of tissue distribution, ubiquitous.

Its subcellular location is the membrane. Its function is as follows. Together with WIT1, required for the nuclear envelope docking of RANGAP proteins in root tips. Plays a role in nuclear shape determination. As component of the SUN-WIP-WIT2-KAKU1 complex, mediates the transfer of cytoplasmic forces to the nuclear envelope (NE), leading to nuclear shape changes. The chain is WPP domain-interacting tail-anchored protein 2 (WIT2) from Arabidopsis thaliana (Mouse-ear cress).